Consider the following 286-residue polypeptide: Toxin zeta (286 aa).

An ATP-binding site is contributed by 39–46 (GQPGSGKT). The segment at 249–286 (MVQNQHQETPEFKAIQQKMESLQPPTPPIPKTPKLPGI) is disordered. Over residues 272 to 286 (PPTPPIPKTPKLPGI) the composition is skewed to pro residues.

It belongs to the zeta toxin family. In terms of assembly, in the presence of the epsilon antitoxin, forms an inactive PezA(2)PezT(2) heterotetramer.

The catalysed reaction is UDP-N-acetyl-alpha-D-glucosamine + ATP = UDP-N-acetyl-alpha-D-glucosamine 3'-phosphate + ADP + H(+). Toxic component of a type II toxin-antitoxin (TA) system. Phosphorylates UDP-N-acetyl-D-glucosamine (UNAG) on the 3'-hydroxyl group of the N-acetyl-D-glucosamine moiety, yielding UNAG-3P. UNAG-3P inhibits MurA, the first committed step in cell wall synthesis, which is then blocked. Phosphorylation is inhibited by cognate epsilon antitoxin. Part of a postsegregational killing (PSK) system involved in the killing of plasmid-free cells. The zeta toxin induces programmed cell death. This Enterococcus hirae protein is Toxin zeta.